The following is a 623-amino-acid chain: Replication protein A 70 kDa DNA-binding subunit (623 aa).

Methionine 1 carries the N-acetylmethionine modification. Glycyl lysine isopeptide (Lys-Gly) (interchain with G-Cter in ubiquitin) cross-links involve residues lysine 22 and lysine 88. Positions 116-163 (VPYNEGYGQQQQQQQQQQQQAVPSPASAATPPASKPQPQNGSLGMGST) are disordered. Over residues 124–154 (QQQQQQQQQQQQAVPSPASAATPPASKPQPQ) the composition is skewed to low complexity. 2 positions are modified to N6-acetyllysine; alternate: lysine 172 and lysine 176. Residues lysine 172 and lysine 176 each participate in a glycyl lysine isopeptide (Lys-Gly) (interchain with G-Cter in ubiquitin); alternate cross-link. Threonine 189 carries the phosphothreonine modification. Lysine 192 is covalently cross-linked (Glycyl lysine isopeptide (Lys-Gly) (interchain with G-Cter in ubiquitin)). Position 200 is a phosphothreonine (threonine 200). Residues 206 to 290 (WTICARVTNK…VKNDYEMTFN (85 aa)) constitute a DNA-binding region (OB). Glycyl lysine isopeptide (Lys-Gly) (interchain with G-Cter in ubiquitin) cross-links involve residues lysine 229 and lysine 253. Position 268 is an N6-acetyllysine; alternate (lysine 268). A Glycyl lysine isopeptide (Lys-Gly) (interchain with G-Cter in ubiquitin); alternate cross-link involves residue lysine 268. Glycyl lysine isopeptide (Lys-Gly) (interchain with G-Cter in ubiquitin) cross-links involve residues lysine 276 and lysine 340. Serine 393 bears the Phosphoserine mark. Lysine 419 is covalently cross-linked (Glycyl lysine isopeptide (Lys-Gly) (interchain with G-Cter in ubiquitin)). A Glycyl lysine isopeptide (Lys-Gly) (interchain with G-Cter in SUMO) cross-link involves residue lysine 458. A Glycyl lysine isopeptide (Lys-Gly) (interchain with G-Cter in ubiquitin) cross-link involves residue lysine 467. The C4-type zinc finger occupies 490 to 512 (CPTQDCNKKVIDQQNGLYRCEKC). Residue lysine 562 forms a Glycyl lysine isopeptide (Lys-Gly) (interchain with G-Cter in ubiquitin) linkage. Lysine 586 participates in a covalent cross-link: Glycyl lysine isopeptide (Lys-Gly) (interchain with G-Cter in SUMO).

It belongs to the replication factor A protein 1 family. Component of the canonical replication protein A complex (RPA), a heterotrimer composed of RPA1, RPA2 and RPA3. The DNA-binding activity may reside exclusively on the RPA1 subunit. Interacts with PRPF19; the PRP19-CDC5L complex is recruited to the sites of DNA repair where it ubiquitinates the replication protein A complex (RPA). Interacts with RIPK1. Interacts with the polymerase alpha subunit POLA1/p180; this interaction stabilizes the replicative complex and reduces the misincorporation rate of DNA polymerase alpha by acting as a fidelity clamp. Interacts with RAD51 and SENP6 to regulate DNA repair. Interacts with HELB; this interaction promotes HELB recruitment to chromatin following DNA damage. Interacts with PRIMPOL; leading to recruit PRIMPOL on chromatin and stimulate its DNA primase activity. Interacts with XPA; the interaction is direct and associates XPA with the RPA complex. Interacts with ETAA1; the interaction is direct and promotes ETAA1 recruitment at stalled replication forks. Interacts with RPA1; this interaction associates HROB with the RPA complex. Interacts (when poly-ADP-ribosylated) with HTATSF1. Post-translationally, DNA damage-induced 'Lys-63'-linked polyubiquitination by PRPF19 mediates ATRIP recruitment to the RPA complex at sites of DNA damage and activation of ATR. Ubiquitinated by RFWD3 at stalled replication forks in response to DNA damage: ubiquitination by RFWD3 does not lead to degradation by the proteasome and promotes removal of the RPA complex from stalled replication forks, promoting homologous recombination. In terms of processing, sumoylated on lysine residues Lys-458 and Lys-586, with Lys-458 being the major site. Sumoylation promotes recruitment of RAD51 to the DNA damage foci to initiate DNA repair through homologous recombination. Desumoylated by SENP6. Poly-ADP-ribosylated by PARP1; promoting recruitment of HTATSF1.

Its subcellular location is the nucleus. The protein localises to the PML body. Functionally, as part of the heterotrimeric replication protein A complex (RPA/RP-A), binds and stabilizes single-stranded DNA intermediates, that form during DNA replication or upon DNA stress. It prevents their reannealing and in parallel, recruits and activates different proteins and complexes involved in DNA metabolism. Thereby, it plays an essential role both in DNA replication and the cellular response to DNA damage. In the cellular response to DNA damage, the RPA complex controls DNA repair and DNA damage checkpoint activation. Through recruitment of ATRIP activates the ATR kinase a master regulator of the DNA damage response. It is required for the recruitment of the DNA double-strand break repair factors RAD51 and RAD52 to chromatin in response to DNA damage. Also recruits to sites of DNA damage proteins like XPA and XPG that are involved in nucleotide excision repair and is required for this mechanism of DNA repair. Also plays a role in base excision repair (BER) probably through interaction with UNG. Also recruits SMARCAL1/HARP, which is involved in replication fork restart, to sites of DNA damage. May also play a role in telomere maintenance. The sequence is that of Replication protein A 70 kDa DNA-binding subunit (Rpa1) from Mus musculus (Mouse).